We begin with the raw amino-acid sequence, 146 residues long: D-aminoacyl-tRNA deacylase (146 aa).

A Gly-cisPro motif, important for rejection of L-amino acids motif is present at residues 137 to 138; the sequence is GP.

Belongs to the DTD family. In terms of assembly, homodimer.

It is found in the cytoplasm. The enzyme catalyses glycyl-tRNA(Ala) + H2O = tRNA(Ala) + glycine + H(+). It carries out the reaction a D-aminoacyl-tRNA + H2O = a tRNA + a D-alpha-amino acid + H(+). Its function is as follows. An aminoacyl-tRNA editing enzyme that deacylates mischarged D-aminoacyl-tRNAs. Also deacylates mischarged glycyl-tRNA(Ala), protecting cells against glycine mischarging by AlaRS. Acts via tRNA-based rather than protein-based catalysis; rejects L-amino acids rather than detecting D-amino acids in the active site. By recycling D-aminoacyl-tRNA to D-amino acids and free tRNA molecules, this enzyme counteracts the toxicity associated with the formation of D-aminoacyl-tRNA entities in vivo and helps enforce protein L-homochirality. The sequence is that of D-aminoacyl-tRNA deacylase from Anoxybacillus flavithermus (strain DSM 21510 / WK1).